The sequence spans 246 residues: Small ribosomal subunit protein uS3 (246 aa).

The region spanning 23–94 (LNEFLTRELA…RIELYAEKVA (72 aa)) is the KH type-2 domain. The segment at 201–246 (GPKKPLPDNVSVVEPKEEKIYETPETEYKIPPPSKPLDDLSEAKVL) is disordered. 2 stretches are compositionally biased toward basic and acidic residues: residues 214–228 (EPKEEKIYETPETEY) and 236–246 (PLDDLSEAKVL). Phosphothreonine is present on residues Thr223 and Thr226. Phosphoserine is present on Ser241.

It belongs to the universal ribosomal protein uS3 family. In terms of assembly, interacts with LTV1; the interaction is RNA-independent.

The protein resides in the cytoplasm. The protein localises to the nucleus. Its function is as follows. Has DNA repair activity directed towards the mutagenic lesions 8-oxoguanine and abasic sites in DNA. It can cleave DNA containing 8-oxoguanine residues efficiently. Also acts as an ap lyase, cleaving phosphodiester bonds via a beta,delta elimination reaction. The protein is Small ribosomal subunit protein uS3 (RpS3) of Drosophila melanogaster (Fruit fly).